The following is a 225-amino-acid chain: MRIVFDIGGSVLVPEDPDVEFIKAIAYELIKISEDHEVAVVVGGGKVARKYIKAAKTFTPNETFKDYIGIHITRANAMLLIAALGEKAYPFVIQDFRKAWEVIQLKKIPIMGGTHPGHTTDAVSALLAEYLQADLLVVVTNVDGVYDSDPRKNPNARKLDRITPEQLVEIAMEAESKAGGSGVVDALAAKFIQRGRIRTYIVGKKDAYHLFDVVRGKHSGTVVEP.

An ATP-binding site is contributed by 9–10 (GS). Glycine 44 provides a ligand contact to UMP. ATP contacts are provided by glycine 45 and arginine 49. UMP contacts are provided by residues aspartate 66 and 114–120 (THPGHTT). Positions 140, 141, 146, and 149 each coordinate ATP.

Belongs to the UMP kinase family. As to quaternary structure, homohexamer.

The protein localises to the cytoplasm. The enzyme catalyses UMP + ATP = UDP + ADP. Its pathway is pyrimidine metabolism; CTP biosynthesis via de novo pathway; UDP from UMP (UMPK route): step 1/1. With respect to regulation, inhibited by UTP. Functionally, catalyzes the reversible phosphorylation of UMP to UDP. This chain is Uridylate kinase, found in Thermococcus gammatolerans (strain DSM 15229 / JCM 11827 / EJ3).